Here is a 682-residue protein sequence, read N- to C-terminus: MDLARRGGAAGADDEGEIERHEPAPEDMESDPAAAREKELELERVQSWREQVTLRGVVAALLIGFMYSVIVMKIALTTGLVPTLNVSAALMAFLALRGWTRVLERLGVAHRPFTRQENCVIETCAVACYTIAFGGGFGSTLLGLDKKTYELAGASPANVPGSYKDPGFGWMAGFVAAISFAGLLSLIPLRKVLVIDYKLTYPSGTATAVLINGFHTKQGDKNARMQVRGFLKYFGLSFVWSFFQWFYTGGEVCGFVQFPTFGLKAWKQTFFFDFSLTYVGAGMICSHLVNISTLLGAILSWGILWPLISKQKGEWYPANIPESSMKSLYGYKAFLCIALIMGDGTYHFFKVFGVTVKSLHQRLSRKRATNRVANGGDEMAALDDLQRDEIFSDGSFPAWAAYAGYAALTVVSAVIIPHMFRQVKWYYVIVAYVLAPLLGFANSYGTGLTDINMAYNYGKIALFIFAAWAGRDNGVIAGLAGGTLVKQLVMASADLMHDFKTGHLTMTSPRSLLVAQFIGTAMGCVVAPLTFLLFYNAFDIGNPTGYWKAPYGLIYRNMAILGVEGFSVLPRHCLALSAGFFAFAFVFSVARDVLPRKYARFVPLPMAMAVPFLVGGSFAIDMCVGSLAVFVWEKVNRKEAVFMVPAVASGLICGDGIWTFPSSILALAKIKPPICMKFTPGS.

Positions 1-36 (MDLARRGGAAGADDEGEIERHEPAPEDMESDPAAAR) are disordered. Helical transmembrane passes span 56–76 (GVVAALLIGFMYSVIVMKIAL), 79–99 (GLVPTLNVSAALMAFLALRGW), 124–144 (CAVACYTIAFGGGFGSTLLGL), 167–187 (GFGWMAGFVAAISFAGLLSLI), 236–256 (LSFVWSFFQWFYTGGEVCGFV), 288–308 (LVNISTLLGAILSWGILWPLI), 334–354 (FLCIALIMGDGTYHFFKVFGV), 396–416 (FPAWAAYAGYAALTVVSAVII), 428–448 (VIVAYVLAPLLGFANSYGTGL), 460–480 (IALFIFAAWAGRDNGVIAGLA), 514–534 (VAQFIGTAMGCVVAPLTFLLF), 549–569 (APYGLIYRNMAILGVEGFSVL), 574–594 (LALSAGFFAFAFVFSVARDVL), 612–632 (FLVGGSFAIDMCVGSLAVFVW), and 640–660 (AVFMVPAVASGLICGDGIWTF).

The protein belongs to the YSL (TC 2.A.67.2) family. In terms of tissue distribution, expressed in roots of young maize seedlings. Not detected in leaves of iron-sufficient plants, but accumulates in roots and leaves of iron-deficient plants.

The protein resides in the membrane. Involved in Fe(3+) uptake. Acts as a proton-coupled symporter for phytosiderophore- and nicotianamine-chelated metals. Capable of transporting either Fe(2+)-nicotianamine or Fe(3+)-phytosiderophore. May transport iron, zinc, nickel, copper and, at a lower rate, manganese and cadmium. The sequence is that of Iron-phytosiderophore transporter yellow stripe 1 (YS1) from Zea mays (Maize).